The primary structure comprises 286 residues: Bifunctional protein FolD (286 aa).

Residues 166–168 and Ile232 each bind NADP(+); that span reads GAS.

It belongs to the tetrahydrofolate dehydrogenase/cyclohydrolase family. Homodimer.

The enzyme catalyses (6R)-5,10-methylene-5,6,7,8-tetrahydrofolate + NADP(+) = (6R)-5,10-methenyltetrahydrofolate + NADPH. The catalysed reaction is (6R)-5,10-methenyltetrahydrofolate + H2O = (6R)-10-formyltetrahydrofolate + H(+). It participates in one-carbon metabolism; tetrahydrofolate interconversion. Functionally, catalyzes the oxidation of 5,10-methylenetetrahydrofolate to 5,10-methenyltetrahydrofolate and then the hydrolysis of 5,10-methenyltetrahydrofolate to 10-formyltetrahydrofolate. In Marinobacter nauticus (strain ATCC 700491 / DSM 11845 / VT8) (Marinobacter aquaeolei), this protein is Bifunctional protein FolD.